We begin with the raw amino-acid sequence, 176 residues long: Peptide methionine sulfoxide reductase MsrA (176 aa).

Residue Cys10 is part of the active site.

It belongs to the MsrA Met sulfoxide reductase family.

It catalyses the reaction L-methionyl-[protein] + [thioredoxin]-disulfide + H2O = L-methionyl-(S)-S-oxide-[protein] + [thioredoxin]-dithiol. It carries out the reaction [thioredoxin]-disulfide + L-methionine + H2O = L-methionine (S)-S-oxide + [thioredoxin]-dithiol. In terms of biological role, has an important function as a repair enzyme for proteins that have been inactivated by oxidation. Catalyzes the reversible oxidation-reduction of methionine sulfoxide in proteins to methionine. This Leptospira borgpetersenii serovar Hardjo-bovis (strain L550) protein is Peptide methionine sulfoxide reductase MsrA.